The following is a 320-amino-acid chain: 4-hydroxyproline 2-epimerase (320 aa).

Residue Cys98 is the Proton acceptor of the active site. Residues Gly99–His100, His218, and Asp242 contribute to the substrate site. Cys246 (proton donor) is an active-site residue. Residue Gly247–Thr248 coordinates substrate.

Belongs to the proline racemase family.

The enzyme catalyses trans-4-hydroxy-L-proline = cis-4-hydroxy-D-proline. Its function is as follows. Catalyzes the epimerization of trans-4-hydroxy-L-proline (t4LHyp) to cis-4-hydroxy-D-proline (c4DHyp). Is likely involved in a degradation pathway that converts t4LHyp to alpha-ketoglutarate. Displays no proline racemase activity. The chain is 4-hydroxyproline 2-epimerase from Burkholderia pseudomallei (strain 1710b).